The primary structure comprises 282 residues: Endochitinase 4 (282 aa).

Positions 1–282 constitute a GH18 domain; it reads GAKNGVHPPL…TWSINWDGSK (282 aa). Residue Glu-112 is the Proton donor of the active site. Asn-265 carries N-linked (GlcNAc...) asparagine glycosylation.

It belongs to the glycosyl hydrolase 18 family. Chitinase class V subfamily.

It is found in the secreted. The catalysed reaction is Random endo-hydrolysis of N-acetyl-beta-D-glucosaminide (1-&gt;4)-beta-linkages in chitin and chitodextrins.. Secreted chitinase involved in the degradation of chitin, a component of the cell walls of fungi and exoskeletal elements of some animals (including worms and arthropods). Participates in the infection process and directly acts in the penetration process of the host cuticle. The polypeptide is Endochitinase 4 (chi4) (Metarhizium anisopliae (Entomophthora anisopliae)).